The following is a 101-amino-acid chain: Apolipoprotein C-II (101 aa).

The signal sequence occupies residues 1 to 22 (MGTRYLLVLLLVLLVLGFEVQG). Residues 66–74 (TMDEKIRDI) are lipid binding. The interval 78 to 101 (STAAVSTYAGIFTDQLLSMLKGDS) is lipoprotein lipase cofactor.

This sequence belongs to the apolipoprotein C2 family. Post-translationally, proapolipoprotein C-II is synthesized as a sialic acid containing glycoprotein which is subsequently desialylated prior to its proteolytic processing. Proapolipoprotein C-II, the major form found in plasma undergoes proteolytic cleavage of its N-terminal hexapeptide to generate apolipoprotein C-II, which occurs as the minor form in plasma. In terms of tissue distribution, highly expressed in the liver. Moderately expressed in the ileum, jejunum and ovary.

It localises to the secreted. Functionally, component of chylomicrons, very low-density lipoproteins (VLDL), low-density lipoproteins (LDL), and high-density lipoproteins (HDL) in plasma. Plays an important role in lipoprotein metabolism as an activator of lipoprotein lipase. Both proapolipoprotein C-II and apolipoprotein C-II can activate lipoprotein lipase. This chain is Apolipoprotein C-II (APOC2), found in Canis lupus familiaris (Dog).